A 396-amino-acid polypeptide reads, in one-letter code: MFRYLLCCFGLVLMYPTGIDMYLVGLPQIANQLGATEAQLHIAFSVYLAGMATTMLFAGSLADRIGRKPITLFSALLFALASYFAARSQSSDLFLVARFVQGVGAGCCYVVAFAILRDALDDKRRAKVLSMVNGVTCIIPVIAPVIGHLIMLRFPWPSLFYTMAVMGLLVFGLCLFVLRETYSKASFHSQTLPRVQTESFKQGFFISRVVITTLGVTTILSYVNVSPMLIMGQMGFDRGQYSNTMAMTALVSMLASFSTPFLLNQFKEKSLILFSQTLFAAAALVFILTQLGWLGQLFNLLGFGLVCSGFAIGFGVTMSQALSPFVARAGVASSLLGIAQVCTSALYIWVMGLLEVSAINILLAILAVGALISITLMLAVPKLSEMVANEQIPESA.

Over 1–4 the chain is Cytoplasmic; it reads MFRY. The helical transmembrane segment at 5 to 25 threads the bilayer; sequence LLCCFGLVLMYPTGIDMYLVG. Over 26–41 the chain is Periplasmic; it reads LPQIANQLGATEAQLH. A helical membrane pass occupies residues 42 to 62; the sequence is IAFSVYLAGMATTMLFAGSLA. The Cytoplasmic segment spans residues 63 to 64; that stretch reads DR. A helical transmembrane segment spans residues 65-85; it reads IGRKPITLFSALLFALASYFA. The Periplasmic segment spans residues 86–92; the sequence is ARSQSSD. Residues 93-113 traverse the membrane as a helical segment; sequence LFLVARFVQGVGAGCCYVVAF. Residues 114-131 lie on the Cytoplasmic side of the membrane; that stretch reads AILRDALDDKRRAKVLSM. Residues 132–152 traverse the membrane as a helical segment; sequence VNGVTCIIPVIAPVIGHLIML. At 153-157 the chain is on the periplasmic side; that stretch reads RFPWP. Residues 158 to 178 traverse the membrane as a helical segment; the sequence is SLFYTMAVMGLLVFGLCLFVL. The Cytoplasmic segment spans residues 179 to 209; the sequence is RETYSKASFHSQTLPRVQTESFKQGFFISRV. The chain crosses the membrane as a helical span at residues 210–230; the sequence is VITTLGVTTILSYVNVSPMLI. Over 231 to 242 the chain is Periplasmic; that stretch reads MGQMGFDRGQYS. The chain crosses the membrane as a helical span at residues 243–263; the sequence is NTMAMTALVSMLASFSTPFLL. The Cytoplasmic segment spans residues 264–277; the sequence is NQFKEKSLILFSQT. 2 helical membrane-spanning segments follow: residues 278–298 and 299–319; these read LFAA…GQLF and NLLG…VTMS. Residues 320-333 lie on the Cytoplasmic side of the membrane; it reads QALSPFVARAGVAS. Residues 334 to 354 traverse the membrane as a helical segment; the sequence is SLLGIAQVCTSALYIWVMGLL. Residues 355-360 lie on the Periplasmic side of the membrane; it reads EVSAIN. A helical membrane pass occupies residues 361–381; that stretch reads ILLAILAVGALISITLMLAVP. Over 382-396 the chain is Cytoplasmic; it reads KLSEMVANEQIPESA.

This sequence belongs to the major facilitator superfamily. DHA1 family. MdtL (TC 2.A.1.2.22) subfamily.

The protein resides in the cell inner membrane. This is Multidrug resistance protein MdtL from Shewanella sp. (strain ANA-3).